Reading from the N-terminus, the 124-residue chain is Kinocilin (124 aa).

A run of 2 helical transmembrane segments spans residues 13-33 and 40-60; these read LQLA…GISV and MGGV…YPFL. Residues 80–124 form a disordered region; the sequence is PHPGADHGEGRSSTNGNKEGARSSLSTVSRTLEKLKPGTRGAEEC. The segment covering 90–109 has biased composition (polar residues); the sequence is RSSTNGNKEGARSSLSTVSR. Over residues 110–124 the composition is skewed to basic and acidic residues; it reads TLEKLKPGTRGAEEC.

The protein resides in the membrane. Its function is as follows. May play a role in stabilizing dense microtubular networks or in vesicular trafficking. In Homo sapiens (Human), this protein is Kinocilin (KNCN).